Here is a 414-residue protein sequence, read N- to C-terminus: 3-oxoacyl-[acyl-carrier-protein] synthase 2 (414 aa).

One can recognise a Ketosynthase family 3 (KS3) domain in the interval Asn-4–Lys-411. Catalysis depends on for beta-ketoacyl synthase activity residues Cys-165, His-304, and His-341.

It belongs to the thiolase-like superfamily. Beta-ketoacyl-ACP synthases family.

It catalyses the reaction a fatty acyl-[ACP] + malonyl-[ACP] + H(+) = a 3-oxoacyl-[ACP] + holo-[ACP] + CO2. The enzyme catalyses (9Z)-hexadecenoyl-[ACP] + malonyl-[ACP] + H(+) = 3-oxo-(11Z)-octadecenoyl-[ACP] + holo-[ACP] + CO2. It functions in the pathway lipid metabolism; fatty acid biosynthesis. Involved in the type II fatty acid elongation cycle. Catalyzes the elongation of a wide range of acyl-ACP by the addition of two carbons from malonyl-ACP to an acyl acceptor. Can efficiently catalyze the conversion of palmitoleoyl-ACP (cis-hexadec-9-enoyl-ACP) to cis-vaccenoyl-ACP (cis-octadec-11-enoyl-ACP), an essential step in the thermal regulation of fatty acid composition. The chain is 3-oxoacyl-[acyl-carrier-protein] synthase 2 (fabF) from Staphylococcus aureus (strain Mu50 / ATCC 700699).